The chain runs to 967 residues: E3 ubiquitin-protein ligase arkadia-C (967 aa).

Disordered regions lie at residues 57 to 175 (QQID…VSSL) and 193 to 276 (RKRF…SGGM). Residues 112-131 (SSFSDCISSPSSSSHFGDSD) are compositionally biased toward low complexity. Polar residues predominate over residues 149 to 160 (GINSTPRTQSAR). Low complexity predominate over residues 232 to 251 (SSSSSSENDLSSESSSSSST). The SUMO interaction motif 1 (SIM) signature appears at 280 to 284 (VVVIE). Residues 305 to 311 (EVEIVTV) carry the SUMO interaction motif 2 (SIM) motif. Residues 321-343 (LGHPRSHWGQNSQSGRTQEHRTR) are disordered. The short motif at 360–364 (VVDLT) is the SUMO interaction motif 3 (SIM) element. Disordered stretches follow at residues 368–452 (DDPT…MPRL), 482–548 (HSHH…LSNN), 629–657 (LHHQ…MDYV), and 669–689 (PSLT…LSTA). Low complexity predominate over residues 385 to 395 (VSTVSSNTSTS). Residues 482–498 (HSHHFPHHHHHHHHHSS) are compositionally biased toward basic residues. Residues 629 to 642 (LHHQTSACPHSNPA) are compositionally biased toward polar residues. Residues 643–654 (SQPPPPPPPPPM) are compositionally biased toward pro residues. The interval 880 to 882 (YPH) is ubiquitin binding. Residues Cys-915 and Cys-918 each coordinate Zn(2+). Residues 915 to 956 (CTICLSILEEGEDVRRLPCMHLFHQVCVDQWLITNKKCPICR) form an RING-type; atypical zinc finger. The interval 930 to 934 (RLPCM) is ubiquitin binding. Zn(2+)-binding residues include His-938 and Cys-941.

This sequence belongs to the Arkadia family. As to quaternary structure, monomer.

The protein localises to the nucleus. It localises to the cytoplasm. Its subcellular location is the PML body. It catalyses the reaction S-ubiquitinyl-[E2 ubiquitin-conjugating enzyme]-L-cysteine + [acceptor protein]-L-lysine = [E2 ubiquitin-conjugating enzyme]-L-cysteine + N(6)-ubiquitinyl-[acceptor protein]-L-lysine.. It functions in the pathway protein modification; protein ubiquitination. Its activity is regulated as follows. Binds free ubiquitin non-covalently via its RING-type zinc finger. Ubiquitin-binding leads to enhance the E3 ubiquitin-protein ligase activity by stabilizing the ubiquitin-conjugating enzyme E2 (donor ubiquitin) in the 'closed' conformation and activating ubiquitin transfer. Its function is as follows. E3 ubiquitin-protein ligase required for mesoderm patterning during embryonic development. Acts as an enhancer of the transcriptional responses of the smad2/smad3 effectors, which are activated downstream of BMP. Acts by mediating ubiquitination and degradation of SMAD inhibitors such as smad7, inducing their proteasomal degradation and thereby enhancing the transcriptional activity of TGF-beta and BMP. Specifically binds polysumoylated chains via SUMO interaction motifs (SIMs) and mediates ubiquitination of sumoylated substrates. The regulation of the BMP-SMAD signaling is however independent of sumoylation and is not dependent of SUMO interaction motifs (SIMs). The protein is E3 ubiquitin-protein ligase arkadia-C (rnf111-c) of Xenopus laevis (African clawed frog).